The chain runs to 1009 residues: Protein-tyrosine kinase 2-beta (1009 aa).

An FERM domain is found at 39–359; the sequence is RILKVCFYSN…GYCRLQGEHQ (321 aa). Serine 361, serine 375, and serine 399 each carry phosphoserine. Phosphotyrosine; by autocatalysis is present on tyrosine 402. Residues 425–683 form the Protein kinase domain; the sequence is VVLNRILGEG…ELVCSLSDVY (259 aa). ATP is bound by residues 431 to 439, lysine 457, and 503 to 509; these read LGEGFFGEV and ELYPYGE. The Proton acceptor role is filled by aspartate 549. Tyrosine 579 carries the post-translational modification Phosphotyrosine. Tyrosine 580 carries the post-translational modification Phosphotyrosine; by SRC, FYN and LCK. Residues 701–725 are disordered; the sequence is TPKILEPTAFQEPPPKPSRPKYRPP. Positions 712–725 are enriched in pro residues; that stretch reads EPPPKPSRPKYRPP. At tyrosine 722 the chain carries Phosphotyrosine. Serine 762 is modified (phosphoserine). Threonine 765 bears the Phosphothreonine mark. Residues 801-1009 are interaction with TGFB1I1; the sequence is KVKMRQILDK…LANLAHPPAE (209 aa). Residues tyrosine 819 and tyrosine 834 each carry the phosphotyrosine modification. Position 839 is a phosphoserine (serine 839). Threonine 842 is modified (phosphothreonine). Tyrosine 849 is modified (phosphotyrosine). A Phosphoserine modification is found at serine 866. The tract at residues 868 to 1009 is focal adhesion targeting (FAT); that stretch reads QPTANLDRTD…LANLAHPPAE (142 aa). Tyrosine 881 bears the Phosphotyrosine; by SRC mark.

This sequence belongs to the protein kinase superfamily. Tyr protein kinase family. FAK subfamily. As to quaternary structure, homodimer, or homooligomer. Interacts with SIRPA and SH2D3C. Interacts with ARHGAP10. Interacts with DLG4. Interacts with KCNA2. Interacts with NPHP1, ASAP1, ASAP2, ARHGAP26, SKAP2 and TGFB1I1. The Tyr-402 phosphorylated form interacts with SRC (via SH2 domain) and SRC family members. Forms a signaling complex with EPHA1, LCK and phosphatidylinositol 3-kinase; upon activation by EFNA1. Interacts with GRB2 (via SH2 domain). Interacts with P53/TP53 and MDM2. Interacts with MYLK. Interacts with BCAR1. Interacts with PDPK1. Interacts (hypophosphorylated) with PXN. Interacts with RB1CC1. Interacts with RHOU. Interacts with VAV1. Interacts with LPXN and PTPN12. Phosphorylated on tyrosine residues in response to various stimuli that elevate the intracellular calcium concentration; this activation is indirect and may be mediated by production of reactive oxygen species (ROS). Tyr-402 is the major autophosphorylation site, but other kinases can also phosphorylate Tyr-402. Autophosphorylation occurs in trans, i.e. one subunit of the dimeric receptor phosphorylates tyrosine residues on the other subunit. Phosphorylation at Tyr-402 promotes interaction with SRC and SRC family members, leading to phosphorylation at Tyr-579; Tyr-580 and Tyr-881. Phosphorylation at Tyr-881 is important for interaction with GRB2. Phosphorylated on tyrosine residues upon activation of FGR and PKC. Recruitment by NPHP1 to cell matrix adhesions initiates Tyr-402 phosphorylation. In monocytes, adherence to substrata is required for tyrosine phosphorylation and kinase activation. Angiotensin II, thapsigargin and L-alpha-lysophosphatidic acid (LPA) also induce autophosphorylation and increase kinase activity. Phosphorylation by MYLK promotes ITGB2 activation and is thus essential to trigger neutrophil transmigration during lung injury. Dephosphorylated by PTPN12. Most abundant in the brain, with highest levels in amygdala and hippocampus. Low levels in kidney (at protein level). Also expressed in spleen and lymphocytes.

It is found in the cytoplasm. It localises to the perinuclear region. The protein localises to the cell membrane. The protein resides in the cell junction. Its subcellular location is the focal adhesion. It is found in the cell projection. It localises to the lamellipodium. The protein localises to the cell cortex. The protein resides in the nucleus. The enzyme catalyses L-tyrosyl-[protein] + ATP = O-phospho-L-tyrosyl-[protein] + ADP + H(+). Its activity is regulated as follows. Activated in response to stimuli that lead to increased intracellular Ca(2+) levels; this activation is indirect and may be mediated by calcium-mediated production of reactive oxygen species (ROS). Activated by autophosphorylation at Tyr-402; this creates a binding site for SRC family kinases and leads to phosphorylation at additional tyrosine residues. Phosphorylation at Tyr-402, Tyr-579 and Tyr-580 is required for optimal kinase activity. Inhibited by PF-562,271, BIRB796, PF-4618433 and by PF-431396, PF-2318841 and their derivatives. Inhibited by sulfoximine-substituted trifluoromethylpyrimidines. Inhibited by 4-amino and 5-aryl substituted pyridinone compounds. Its function is as follows. Non-receptor protein-tyrosine kinase that regulates reorganization of the actin cytoskeleton, cell polarization, cell migration, adhesion, spreading and bone remodeling. Plays a role in the regulation of the humoral immune response, and is required for normal levels of marginal B-cells in the spleen and normal migration of splenic B-cells. Required for normal macrophage polarization and migration towards sites of inflammation. Regulates cytoskeleton rearrangement and cell spreading in T-cells, and contributes to the regulation of T-cell responses. Promotes osteoclastic bone resorption; this requires both PTK2B/PYK2 and SRC. May inhibit differentiation and activity of osteoprogenitor cells. Functions in signaling downstream of integrin and collagen receptors, immune receptors, G-protein coupled receptors (GPCR), cytokine, chemokine and growth factor receptors, and mediates responses to cellular stress. Forms multisubunit signaling complexes with SRC and SRC family members upon activation; this leads to the phosphorylation of additional tyrosine residues, creating binding sites for scaffold proteins, effectors and substrates. Regulates numerous signaling pathways. Promotes activation of phosphatidylinositol 3-kinase and of the AKT1 signaling cascade. Promotes activation of NOS3. Regulates production of the cellular messenger cGMP. Promotes activation of the MAP kinase signaling cascade, including activation of MAPK1/ERK2, MAPK3/ERK1 and MAPK8/JNK1. Promotes activation of Rho family GTPases, such as RHOA and RAC1. Recruits the ubiquitin ligase MDM2 to P53/TP53 in the nucleus, and thereby regulates P53/TP53 activity, P53/TP53 ubiquitination and proteasomal degradation. Acts as a scaffold, binding to both PDPK1 and SRC, thereby allowing SRC to phosphorylate PDPK1 at 'Tyr-9, 'Tyr-373', and 'Tyr-376'. Promotes phosphorylation of NMDA receptors by SRC family members, and thereby contributes to the regulation of NMDA receptor ion channel activity and intracellular Ca(2+) levels. May also regulate potassium ion transport by phosphorylation of potassium channel subunits. Phosphorylates SRC; this increases SRC kinase activity. Phosphorylates ASAP1, NPHP1, KCNA2 and SHC1. Promotes phosphorylation of ASAP2, RHOU and PXN; this requires both SRC and PTK2/PYK2. The protein is Protein-tyrosine kinase 2-beta (PTK2B) of Homo sapiens (Human).